The following is a 179-amino-acid chain: Exosome complex component Csl4 (179 aa).

Residues 58–137 (GDVVLGRVVD…RLSTKEEEMG (80 aa)) form the S1 motif domain. Positions 143, 146, 159, and 162 each coordinate Zn(2+).

The protein belongs to the CSL4 family. As to quaternary structure, component of the archaeal exosome complex. Forms a trimer of Rrp4 and/or Csl4 subunits. The trimer associates with a hexameric ring-like arrangement composed of 3 Rrp41-Rrp42 heterodimers. Interacts with DnaG.

Its subcellular location is the cytoplasm. Non-catalytic component of the exosome, which is a complex involved in RNA degradation. Increases the RNA binding and the efficiency of RNA degradation. Helpful for the interaction of the exosome with A-poor RNAs. The sequence is that of Exosome complex component Csl4 from Archaeoglobus fulgidus (strain ATCC 49558 / DSM 4304 / JCM 9628 / NBRC 100126 / VC-16).